The sequence spans 279 residues: DegV domain-containing protein SpyM3_1149 (279 aa).

Positions 4-278 (IKIVTDSSIT…EGAFAVMVRY (275 aa)) constitute a DegV domain. Hexadecanoate-binding residues include T62 and S95.

Its function is as follows. May bind long-chain fatty acids, such as palmitate, and may play a role in lipid transport or fatty acid metabolism. This Streptococcus pyogenes serotype M3 (strain ATCC BAA-595 / MGAS315) protein is DegV domain-containing protein SpyM3_1149.